Consider the following 277-residue polypeptide: Tryptophan synthase alpha chain (277 aa).

Catalysis depends on proton acceptor residues Glu43 and Glu54.

The protein belongs to the TrpA family. In terms of assembly, tetramer of two alpha and two beta chains.

It catalyses the reaction (1S,2R)-1-C-(indol-3-yl)glycerol 3-phosphate + L-serine = D-glyceraldehyde 3-phosphate + L-tryptophan + H2O. It participates in amino-acid biosynthesis; L-tryptophan biosynthesis; L-tryptophan from chorismate: step 5/5. Its function is as follows. The alpha subunit is responsible for the aldol cleavage of indoleglycerol phosphate to indole and glyceraldehyde 3-phosphate. The protein is Tryptophan synthase alpha chain of Haloferax volcanii (strain ATCC 29605 / DSM 3757 / JCM 8879 / NBRC 14742 / NCIMB 2012 / VKM B-1768 / DS2) (Halobacterium volcanii).